Here is a 142-residue protein sequence, read N- to C-terminus: Small ribosomal subunit protein uS9 (142 aa).

The segment at 117–142 (KGDPRRTEHKKPGIKHARSKRQKAYR) is disordered. Over residues 123–142 (TEHKKPGIKHARSKRQKAYR) the composition is skewed to basic residues.

It belongs to the universal ribosomal protein uS9 family.

This is Small ribosomal subunit protein uS9 from Pyrobaculum aerophilum (strain ATCC 51768 / DSM 7523 / JCM 9630 / CIP 104966 / NBRC 100827 / IM2).